The chain runs to 554 residues: MTPLIFVTGGVVSSLGKGIAAASLAAILEARGLKVTMMKLDPYINVDPGTMSPFQHGEVYVTDDGAETDLDLGHYERFVRTRLSRKNSVTTGRIYENVIRKERRGDYLGATVQVIPHITDEIRRCIDEATEGYDVALVEIGGTVGDIESLPFLEAIRQVRTERGPEKALFMHLTLVPYIGAAGELKTKPTQHSVKELRSIGIQPDVLLCRSEQAVPDSERRKIAQFTNVSERAVISVPDVDVLYRIPSGLHAQGLDEIVVNQLKLADKAGPVDLSMWEDAVDATLHPLDEVTIAVVGKYVDHQDAYKSVGEALKHGGLRQRTKVNLKWLEAQDLEGTDMAALADVDGILVPGGFGDRGFEGKVLTSKFAREQQVPYFGICYGMQAAVVDYARNVVGLEGANSTENDRQSPNPVIGLITEWRTATGDVEKRDDKSDLGGTMRLGLQEQRLKPGTLARELYGKDVVAERHRHRYEFNNRYRTQLEDAGLVIAGKSMDDTLVEVVELPRDAHPWFLACQAHPEFLSTPRDGHPLFIGFIRAARERKAGGKLLSEARA.

Residues 1 to 265 (MTPLIFVTGG…DEIVVNQLKL (265 aa)) form an amidoligase domain region. Ser13 serves as a coordination point for CTP. Ser13 serves as a coordination point for UTP. Residue 14 to 19 (SLGKGI) coordinates ATP. Mg(2+) is bound by residues Asp71 and Glu139. Residues 146-148 (DIE), 186-191 (KTKPTQ), and Lys222 each bind CTP. UTP-binding positions include 186–191 (KTKPTQ) and Lys222. Residues 292–545 (TIAVVGKYVD…IRAARERKAG (254 aa)) enclose the Glutamine amidotransferase type-1 domain. Gly353 lines the L-glutamine pocket. The active-site Nucleophile; for glutamine hydrolysis is Cys380. Residues 381–384 (YGMQ), Glu404, and Arg471 each bind L-glutamine. Catalysis depends on residues His518 and Glu520.

The protein belongs to the CTP synthase family. As to quaternary structure, homotetramer.

It catalyses the reaction UTP + L-glutamine + ATP + H2O = CTP + L-glutamate + ADP + phosphate + 2 H(+). It carries out the reaction L-glutamine + H2O = L-glutamate + NH4(+). The enzyme catalyses UTP + NH4(+) + ATP = CTP + ADP + phosphate + 2 H(+). It participates in pyrimidine metabolism; CTP biosynthesis via de novo pathway; CTP from UDP: step 2/2. Its activity is regulated as follows. Allosterically activated by GTP, when glutamine is the substrate; GTP has no effect on the reaction when ammonia is the substrate. The allosteric effector GTP functions by stabilizing the protein conformation that binds the tetrahedral intermediate(s) formed during glutamine hydrolysis. Inhibited by the product CTP, via allosteric rather than competitive inhibition. Its function is as follows. Catalyzes the ATP-dependent amination of UTP to CTP with either L-glutamine or ammonia as the source of nitrogen. Regulates intracellular CTP levels through interactions with the four ribonucleotide triphosphates. This is CTP synthase from Stenotrophomonas maltophilia (strain K279a).